A 600-amino-acid polypeptide reads, in one-letter code: Glutamine--fructose-6-phosphate aminotransferase [isomerizing] (600 aa).

The active-site Nucleophile; for GATase activity is Cys2. Residues Cys2–Glu217 form the Glutamine amidotransferase type-2 domain. SIS domains lie at Ile283–Glu422 and Leu452–Pro590. Lys595 (for Fru-6P isomerization activity) is an active-site residue.

In terms of assembly, homodimer.

It is found in the cytoplasm. It carries out the reaction D-fructose 6-phosphate + L-glutamine = D-glucosamine 6-phosphate + L-glutamate. In terms of biological role, catalyzes the first step in hexosamine metabolism, converting fructose-6P into glucosamine-6P using glutamine as a nitrogen source. This chain is Glutamine--fructose-6-phosphate aminotransferase [isomerizing], found in Bacillus thuringiensis subsp. konkukian (strain 97-27).